Consider the following 328-residue polypeptide: Tetraacyldisaccharide 4'-kinase (328 aa).

ATP is bound at residue 55-62 (TVGGNGKT).

The protein belongs to the LpxK family.

The catalysed reaction is a lipid A disaccharide + ATP = a lipid IVA + ADP + H(+). It functions in the pathway glycolipid biosynthesis; lipid IV(A) biosynthesis; lipid IV(A) from (3R)-3-hydroxytetradecanoyl-[acyl-carrier-protein] and UDP-N-acetyl-alpha-D-glucosamine: step 6/6. Its function is as follows. Transfers the gamma-phosphate of ATP to the 4'-position of a tetraacyldisaccharide 1-phosphate intermediate (termed DS-1-P) to form tetraacyldisaccharide 1,4'-bis-phosphate (lipid IVA). The chain is Tetraacyldisaccharide 4'-kinase from Hamiltonella defensa subsp. Acyrthosiphon pisum (strain 5AT).